Consider the following 83-residue polypeptide: U25-theraphotoxin-Cg1a (83 aa).

Residues 1–23 (MRFHTLLFLSFLLLVSCALICTA) form the signal peptide. Positions 24-48 (QHPGLEKSGMFHENVGKGQHIEEKR) are excised as a propeptide. Intrachain disulfides connect C50/C66, C57/C71, and C65/C81.

This sequence belongs to the neurotoxin 07 (Beta/delta-agtx) family. 03 (aga-4) subfamily. JZTX sub-subfamily. As to expression, expressed by the venom gland.

The protein localises to the secreted. Inhibits TTX-sensitive sodium currents in rat dorsal root ganglion (DRG) neurons. This chain is U25-theraphotoxin-Cg1a, found in Chilobrachys guangxiensis (Chinese earth tiger tarantula).